Reading from the N-terminus, the 349-residue chain is Flap endonuclease 1-B (349 aa).

Positions 1-105 (MGIKGLTKLL…GELAKRLARR (105 aa)) are N-domain. Asp34 is a binding site for Mg(2+). Residue Arg71 coordinates DNA. Mg(2+) is bound by residues Asp87, Glu159, Glu161, Asp180, and Asp182. The segment at 123–254 (DMEKYSKRTV…QTALKLIRQH (132 aa)) is I-domain. Position 159 (Glu159) interacts with DNA. DNA contacts are provided by Gly232 and Asp234. Mg(2+) is bound at residue Asp234.

Belongs to the XPG/RAD2 endonuclease family. FEN1 subfamily. As to quaternary structure, interacts with PCNA. Three molecules of FEN1 bind to one PCNA trimer with each molecule binding to one PCNA monomer. PCNA stimulates the nuclease activity without altering cleavage specificity. It depends on Mg(2+) as a cofactor. Post-translationally, phosphorylated. Phosphorylation upon DNA damage induces relocalization to the nuclear plasma.

The protein localises to the nucleus. It is found in the nucleolus. The protein resides in the nucleoplasm. Its subcellular location is the mitochondrion. Structure-specific nuclease with 5'-flap endonuclease and 5'-3' exonuclease activities involved in DNA replication and repair. During DNA replication, cleaves the 5'-overhanging flap structure that is generated by displacement synthesis when DNA polymerase encounters the 5'-end of a downstream Okazaki fragment. It enters the flap from the 5'-end and then tracks to cleave the flap base, leaving a nick for ligation. Also involved in the long patch base excision repair (LP-BER) pathway, by cleaving within the apurinic/apyrimidinic (AP) site-terminated flap. Acts as a genome stabilization factor that prevents flaps from equilibrating into structures that lead to duplications and deletions. Also possesses 5'-3' exonuclease activity on nicked or gapped double-stranded DNA, and exhibits RNase H activity. Also involved in replication and repair of rDNA and in repairing mitochondrial DNA. This Physcomitrium patens (Spreading-leaved earth moss) protein is Flap endonuclease 1-B.